We begin with the raw amino-acid sequence, 498 residues long: MSEPVTLSFARLTAAPKGVLIVLTDETLAFGAQTQKLLKGADAAITRAFDAERYKGKAWSTIDLLAPAGLDAPRLVVISVGKAGELKPADFLKLGGVAAGKIPSSAREATVVLDLPGAKIGPESAAEVALGIRLRTYSFDRYKTKKKDDTERGALAMTLLVSDEAGTKRAATTADAVGDGVLFARDLVNEPANVLDPPEFARRAEEHLSSVGVEIEVLDDAGLARAGMHTLLGVGQGSIKESRVVIMRWNGGPAGEPPVAFIGKGVTFDTGGISIKPAAGMEDMKGDMGGAACVTGLMYALAARKAKVNAVGLIGLVENMPDGAAQRPGDIVTSLSGQTIEIINTDAEGRLVLCDVLWYAKEQFKPKFMIDLATLTGAILVALGSEYAGLFSNDDTLSERLTKTGQETGERVWRMPLGPEYDKLVDSKFADMKNTGGRHAGSITAAQFLQRFVDKTPWAHLDIAGTAMSSPASDINKSWGSGWGVRLLNQLVKDHYEG.

Mn(2+) is bound by residues lysine 264 and aspartate 269. Lysine 276 is a catalytic residue. The Mn(2+) site is built by aspartate 287, aspartate 346, and glutamate 348. Arginine 350 is an active-site residue.

It belongs to the peptidase M17 family. It depends on Mn(2+) as a cofactor.

It localises to the cytoplasm. It carries out the reaction Release of an N-terminal amino acid, Xaa-|-Yaa-, in which Xaa is preferably Leu, but may be other amino acids including Pro although not Arg or Lys, and Yaa may be Pro. Amino acid amides and methyl esters are also readily hydrolyzed, but rates on arylamides are exceedingly low.. It catalyses the reaction Release of an N-terminal amino acid, preferentially leucine, but not glutamic or aspartic acids.. Presumably involved in the processing and regular turnover of intracellular proteins. Catalyzes the removal of unsubstituted N-terminal amino acids from various peptides. The polypeptide is Probable cytosol aminopeptidase (Xanthobacter autotrophicus (strain ATCC BAA-1158 / Py2)).